The following is a 193-amino-acid chain: ATP-dependent Clp protease proteolytic subunit (193 aa).

Ser-98 serves as the catalytic Nucleophile. The active site involves His-123.

This sequence belongs to the peptidase S14 family. In terms of assembly, fourteen ClpP subunits assemble into 2 heptameric rings which stack back to back to give a disk-like structure with a central cavity, resembling the structure of eukaryotic proteasomes.

It localises to the cytoplasm. The enzyme catalyses Hydrolysis of proteins to small peptides in the presence of ATP and magnesium. alpha-casein is the usual test substrate. In the absence of ATP, only oligopeptides shorter than five residues are hydrolyzed (such as succinyl-Leu-Tyr-|-NHMec, and Leu-Tyr-Leu-|-Tyr-Trp, in which cleavage of the -Tyr-|-Leu- and -Tyr-|-Trp bonds also occurs).. Cleaves peptides in various proteins in a process that requires ATP hydrolysis. Has a chymotrypsin-like activity. Plays a major role in the degradation of misfolded proteins. The chain is ATP-dependent Clp protease proteolytic subunit from Agathobacter rectalis (strain ATCC 33656 / DSM 3377 / JCM 17463 / KCTC 5835 / VPI 0990) (Eubacterium rectale).